The primary structure comprises 628 residues: F-box only protein 21 (628 aa).

The region spanning 28–84 (SCLVNLPGEVLEYILCCGSLTAADIGRVSSTCRRLRELCQSSGKVWKEQFRVRWPSL) is the F-box domain.

As to quaternary structure, directly interacts with SKP1 and CUL1.

Substrate-recognition component of the SCF (SKP1-CUL1-F-box protein)-type E3 ubiquitin ligase complex. The polypeptide is F-box only protein 21 (FBXO21) (Homo sapiens (Human)).